The primary structure comprises 414 residues: Ferredoxin--NAD(P)(+) reductase fdr (414 aa).

7–38 contacts FAD; sequence DVVIVGAGHGGAQTAIALRQNGFAGTIAIIGA. Residue 149-177 participates in NAD(+) binding; that stretch reads KVVIIGGGYIGLEAAAVMAKFGKNVTLIE.

It belongs to the FAD-dependent oxidoreductase family. Monomer. Carbazole 1,9a-dioxygenase complex consists of a terminal oxygenase component CarAa, a ferredoxin reductase component fdr and a ferredoxin component CarAc. FAD is required as a cofactor.

The catalysed reaction is 2 reduced [2Fe-2S]-[ferredoxin] + NAD(+) + H(+) = 2 oxidized [2Fe-2S]-[ferredoxin] + NADH. It catalyses the reaction 2 reduced [2Fe-2S]-[ferredoxin] + NADP(+) + H(+) = 2 oxidized [2Fe-2S]-[ferredoxin] + NADPH. Part of the multicomponent carbazole 1,9a-dioxygenase (CARDO), that converts carbazole (CAR) into 2-aminobiphenyl-2,3-diol. This Sphingomonas sp protein is Ferredoxin--NAD(P)(+) reductase fdr (fdr).